The sequence spans 552 residues: Cilia- and flagella- associated protein 210 (552 aa).

Coiled-coil stretches lie at residues 53-143 (DEWK…NAKQ), 186-307 (EEQL…KKRL), 348-409 (IARD…VMKA), and 460-488 (TEALVAEKEKEFQDYAREVIELESETTNK). Residues 216–238 (KDHLKQIKEHEEEEERRKKYEEK) form a disordered region.

As to quaternary structure, microtubule inner protein component of sperm flagellar doublet microtubules. In terms of tissue distribution, expressed in airway epithelial cells.

It localises to the cytoplasm. Its subcellular location is the cytoskeleton. It is found in the cilium axoneme. The protein localises to the flagellum axoneme. Functionally, microtubule inner protein (MIP) part of the dynein-decorated doublet microtubules (DMTs) in cilia axoneme, which is required for motile cilia beating. The polypeptide is Cilia- and flagella- associated protein 210 (Homo sapiens (Human)).